The primary structure comprises 156 residues: Putative NrdI-like protein (156 aa).

The chain is Putative NrdI-like protein from Streptococcus pneumoniae (strain ATCC BAA-255 / R6).